A 177-amino-acid chain; its full sequence is MSRIGKKAVAIPSGVQVTLAGQTVTVKGPKGQLSWTIADEVEVKQEGAELLLAPRVDTKRAKGMWGLSRTLVANMVHGVTVGFEESLELVGVGYRAAMKGTALSLQLGFSHDVDVAAPAGVTFAVPKQTEIKIAGIDKQAVGEIAAKIRRIRPPEPYKGKGVRYAGEKVRRKEGKKK.

The disordered stretch occupies residues 157-177 (YKGKGVRYAGEKVRRKEGKKK).

The protein belongs to the universal ribosomal protein uL6 family. In terms of assembly, part of the 50S ribosomal subunit.

Its function is as follows. This protein binds to the 23S rRNA, and is important in its secondary structure. It is located near the subunit interface in the base of the L7/L12 stalk, and near the tRNA binding site of the peptidyltransferase center. The chain is Large ribosomal subunit protein uL6 from Caulobacter vibrioides (strain ATCC 19089 / CIP 103742 / CB 15) (Caulobacter crescentus).